A 139-amino-acid chain; its full sequence is MATRHQAREAVIGLLYAYDLGNPEIKKFAEDILEEKKIRNKQREFALALFKGTVEHLDTIDEMIKKHLESWDMERVGHIERAILRLGVYELFYTDLDPAIVINEAVELAKKLGTDQSPKFINGVLDAIAKEVKNGSQKA.

It belongs to the NusB family.

Involved in transcription antitermination. Required for transcription of ribosomal RNA (rRNA) genes. Binds specifically to the boxA antiterminator sequence of the ribosomal RNA (rrn) operons. This chain is Transcription antitermination protein NusB, found in Nitratiruptor sp. (strain SB155-2).